The following is a 571-amino-acid chain: Phosphoribosylaminoimidazole carboxylase (571 aa).

A Phosphoserine modification is found at Ser37. Residues 110–298 (KEHLIKNGIA…QFEAHLRSIL (189 aa)) form the ATP-grasp domain. 138-193 (GRDLGFPFVLKSRTLAYDGRGNFVVKNKEMIPEALEVLKDRPLYAEKWAPFTKELA) is a binding site for ATP.

It in the C-terminal section; belongs to the AIR carboxylase family. Class I subfamily.

It catalyses the reaction 5-amino-1-(5-phospho-D-ribosyl)imidazole-4-carboxylate + H(+) = 5-amino-1-(5-phospho-beta-D-ribosyl)imidazole + CO2. It participates in purine metabolism; IMP biosynthesis via de novo pathway; 5-amino-1-(5-phospho-D-ribosyl)imidazole-4-carboxylate from 5-amino-1-(5-phospho-D-ribosyl)imidazole (carboxylase route): step 1/1. The protein is Phosphoribosylaminoimidazole carboxylase (ADE2) of Saccharomyces cerevisiae (strain ATCC 204508 / S288c) (Baker's yeast).